The sequence spans 249 residues: Probable transcriptional regulatory protein MXAN_4974 (249 aa).

Belongs to the TACO1 family.

The protein localises to the cytoplasm. This chain is Probable transcriptional regulatory protein MXAN_4974, found in Myxococcus xanthus (strain DK1622).